A 583-amino-acid chain; its full sequence is Alpha-1,3-arabinosyltransferase XAT2 (583 aa).

The Cytoplasmic portion of the chain corresponds to 1 to 21 (MKPVERAKLVRSLRQESRRLR). Residues 22–42 (LLVLVIGFFLVTLTFVVISKP) traverse the membrane as a helical; Signal-anchor for type II membrane protein segment. Over 43-583 (DALLFNLNGR…LLEVLDQLNQ (541 aa)) the chain is Lumenal. The tract at residues 73-178 (RRSADTFPAA…NGKQEDGKPN (106 aa)) is disordered. Basic and acidic residues-rich tracts occupy residues 102–121 (TSEEEKRLLSSEPEQGKNEE) and 135–146 (EDNKNGEEEGHT). Residues 149-160 (SKVTLPTVSNYT) are compositionally biased toward polar residues. N-linked (GlcNAc...) asparagine glycosylation is present at Asn158. Residues 162–178 (RDAEDTDNGKQEDGKPN) are compositionally biased toward basic and acidic residues. N-linked (GlcNAc...) asparagine glycans are attached at residues Asn229, Asn382, Asn450, and Asn485.

The protein belongs to the glycosyltransferase 61 family.

The protein localises to the golgi apparatus membrane. The protein operates within glycan metabolism. In terms of biological role, glycosyltransferase involved in the arabinosylation of xylan, the major hemicellulose (non-cellulosic component) of primary and secondary walls of angiosperms. Possesses alpha-1,3-arabinosyltransferase activity, transferring an arabinofuranose residue to the xylan backbone. The protein is Alpha-1,3-arabinosyltransferase XAT2 of Oryza sativa subsp. japonica (Rice).